Consider the following 386-residue polypeptide: Galactokinase (386 aa).

35-38 contributes to the substrate binding site; it reads EHTD. Residues serine 69 and 125–131 contribute to the ATP site; that span reads GAGLSSS. Serine 131 and glutamate 163 together coordinate Mg(2+). Aspartate 175 (proton acceptor) is an active-site residue. Residue tyrosine 224 participates in substrate binding.

The protein belongs to the GHMP kinase family. GalK subfamily.

The protein resides in the cytoplasm. The enzyme catalyses alpha-D-galactose + ATP = alpha-D-galactose 1-phosphate + ADP + H(+). The protein operates within carbohydrate metabolism; galactose metabolism. Functionally, catalyzes the transfer of the gamma-phosphate of ATP to D-galactose to form alpha-D-galactose-1-phosphate (Gal-1-P). The polypeptide is Galactokinase (Vibrio vulnificus (strain YJ016)).